A 213-amino-acid chain; its full sequence is Cytochrome c biogenesis ATP-binding export protein CcmA (213 aa).

Residues 11-213 form the ABC transporter domain; it reads LTARNLECIR…TVTVHHLVLS (203 aa). Position 43–50 (43–50) interacts with ATP; the sequence is GPNGSGKT.

Belongs to the ABC transporter superfamily. CcmA exporter (TC 3.A.1.107) family. As to quaternary structure, the complex is composed of two ATP-binding proteins (CcmA) and two transmembrane proteins (CcmB).

It localises to the cell inner membrane. It carries out the reaction heme b(in) + ATP + H2O = heme b(out) + ADP + phosphate + H(+). Functionally, part of the ABC transporter complex CcmAB involved in the biogenesis of c-type cytochromes; once thought to export heme, this seems not to be the case, but its exact role is uncertain. Responsible for energy coupling to the transport system. The sequence is that of Cytochrome c biogenesis ATP-binding export protein CcmA from Nitrosomonas europaea (strain ATCC 19718 / CIP 103999 / KCTC 2705 / NBRC 14298).